We begin with the raw amino-acid sequence, 501 residues long: Large ribosomal subunit protein uL2m (501 aa).

Disordered stretches follow at residues 187 to 217 (GRERLSPLRGENTFSQSEGQRWKTQSGAPRR) and 459 to 501 (AMNP…KRRN). A compositionally biased stretch (polar residues) spans 198–213 (NTFSQSEGQRWKTQSG). The span at 464-474 (DHPHGGGEGRT) shows a compositional bias: basic and acidic residues.

The protein belongs to the universal ribosomal protein uL2 family.

It is found in the mitochondrion. This Marchantia polymorpha (Common liverwort) protein is Large ribosomal subunit protein uL2m (RPL2).